A 382-amino-acid polypeptide reads, in one-letter code: Galactokinase (382 aa).

34–37 (EHTD) lines the substrate pocket. ATP is bound at residue 124–130 (GAGLSSS). Residues serine 130 and glutamate 162 each contribute to the Mg(2+) site. Aspartate 174 acts as the Proton acceptor in catalysis. Tyrosine 223 contacts substrate.

Belongs to the GHMP kinase family. GalK subfamily.

It localises to the cytoplasm. The enzyme catalyses alpha-D-galactose + ATP = alpha-D-galactose 1-phosphate + ADP + H(+). The protein operates within carbohydrate metabolism; galactose metabolism. Its function is as follows. Catalyzes the transfer of the gamma-phosphate of ATP to D-galactose to form alpha-D-galactose-1-phosphate (Gal-1-P). The sequence is that of Galactokinase from Salmonella gallinarum (strain 287/91 / NCTC 13346).